We begin with the raw amino-acid sequence, 145 residues long: 3-dehydroquinate dehydratase (145 aa).

The Proton acceptor role is filled by Y23. N75, H81, and D88 together coordinate substrate. The Proton donor role is filled by H101. Substrate contacts are provided by residues 102–103 (IS) and R112.

This sequence belongs to the type-II 3-dehydroquinase family. Homododecamer.

It carries out the reaction 3-dehydroquinate = 3-dehydroshikimate + H2O. It functions in the pathway metabolic intermediate biosynthesis; chorismate biosynthesis; chorismate from D-erythrose 4-phosphate and phosphoenolpyruvate: step 3/7. Catalyzes a trans-dehydration via an enolate intermediate. The polypeptide is 3-dehydroquinate dehydratase (Caldicellulosiruptor bescii (strain ATCC BAA-1888 / DSM 6725 / KCTC 15123 / Z-1320) (Anaerocellum thermophilum)).